The following is a 107-amino-acid chain: Nucleoid-associated protein Oant_0022 (107 aa).

Belongs to the YbaB/EbfC family. In terms of assembly, homodimer.

The protein localises to the cytoplasm. It is found in the nucleoid. Its function is as follows. Binds to DNA and alters its conformation. May be involved in regulation of gene expression, nucleoid organization and DNA protection. This Brucella anthropi (strain ATCC 49188 / DSM 6882 / CCUG 24695 / JCM 21032 / LMG 3331 / NBRC 15819 / NCTC 12168 / Alc 37) (Ochrobactrum anthropi) protein is Nucleoid-associated protein Oant_0022.